A 441-amino-acid polypeptide reads, in one-letter code: MSKPVVAIVGRPNVGKSTLFNRLAGGLVAIVENRPGVTRDRLYRDSEWLGRKFTIIDTGGIEFVNENTPITAQMRRQAEIAIEEADVIVFVIDAQISPTPDDDMIAQTLRRSGKPVILAANKVENFAKTELYEFYNLGLGEPVPISAVHGMNIGDLLDEVVSHFPEDIEEEVDPDTIRIAVVGRPNVGKSSLVNTLLGEERVIVSNIPGTTRDAIDSAFEHEGKHYIIIDTAGMRRKGRIEELTEQYSVSRSLRAVDRSDVILMLLDAGEGVTEQDKKIAGYAHEAGKGIVLVVNKWDLIEKDDKTMNRFEKDIREELGFMQYAPTLFISAKTGQRVTKLLDLVDFVAEQNSTRVATATLNTLVREWVHLNPPPTDKGRRLKVLYATQVGVKPPTFVFFVNDHELMHFSYRRYLENQLRSSFGFEGSPIRMIVRQKDEERE.

2 consecutive EngA-type G domains span residues 4-168 (PVVA…PEDI) and 177-352 (IRIA…EQNS). GTP is bound by residues 10 to 17 (GRPNVGKS), 57 to 61 (DTGGI), 121 to 124 (NKVE), 183 to 190 (GRPNVGKS), 230 to 234 (DTAGM), and 295 to 298 (NKWD). Residues 353–437 (TRVATATLNT…PIRMIVRQKD (85 aa)) form the KH-like domain.

Belongs to the TRAFAC class TrmE-Era-EngA-EngB-Septin-like GTPase superfamily. EngA (Der) GTPase family. Associates with the 50S ribosomal subunit.

Functionally, GTPase that plays an essential role in the late steps of ribosome biogenesis. This chain is GTPase Der, found in Desulfitobacterium hafniense (strain Y51).